We begin with the raw amino-acid sequence, 504 residues long: Maturase K (504 aa).

Belongs to the intron maturase 2 family. MatK subfamily.

The protein resides in the plastid. It is found in the chloroplast. Functionally, usually encoded in the trnK tRNA gene intron. Probably assists in splicing its own and other chloroplast group II introns. This chain is Maturase K, found in Turritis glabra (Tower mustard).